Here is a 341-residue protein sequence, read N- to C-terminus: Myb-related transcription factor, partner of profilin (341 aa).

The region spanning valine 8–lysine 80 is the Myb-like domain. Disordered stretches follow at residues lysine 84 to methionine 103, leucine 180 to valine 210, and alanine 309 to leucine 341. A compositionally biased stretch (pro residues) spans threonine 184–serine 200. The span at asparagine 321–leucine 341 shows a compositional bias: basic residues.

The protein localises to the nucleus. In terms of biological role, transcriptional repressor; DNA-binding protein that specifically recognizes the core sequence 5'-YAAC[GT]G-3'. In Xenopus laevis (African clawed frog), this protein is Myb-related transcription factor, partner of profilin (mypop).